The sequence spans 239 residues: Carboxy-S-adenosyl-L-methionine synthase (239 aa).

S-adenosyl-L-methionine contacts are provided by residues Y35, G64–S66, D114–L115, N129, and R196.

This sequence belongs to the class I-like SAM-binding methyltransferase superfamily. Cx-SAM synthase family. In terms of assembly, homodimer.

The enzyme catalyses prephenate + S-adenosyl-L-methionine = carboxy-S-adenosyl-L-methionine + 3-phenylpyruvate + H2O. Functionally, catalyzes the conversion of S-adenosyl-L-methionine (SAM) to carboxy-S-adenosyl-L-methionine (Cx-SAM). The polypeptide is Carboxy-S-adenosyl-L-methionine synthase (Helicobacter hepaticus (strain ATCC 51449 / 3B1)).